A 279-amino-acid polypeptide reads, in one-letter code: Pantothenate synthetase (279 aa).

26–33 contacts ATP; it reads MGNLHEGH. Catalysis depends on His-33, which acts as the Proton donor. Gln-57 is a binding site for (R)-pantoate. Gln-57 is a binding site for beta-alanine. 144–147 provides a ligand contact to ATP; that stretch reads GKKD. Gln-150 lines the (R)-pantoate pocket. Residues Val-173 and 181–184 contribute to the ATP site; that span reads LSSR.

Belongs to the pantothenate synthetase family. In terms of assembly, homodimer.

The protein resides in the cytoplasm. The catalysed reaction is (R)-pantoate + beta-alanine + ATP = (R)-pantothenate + AMP + diphosphate + H(+). It functions in the pathway cofactor biosynthesis; (R)-pantothenate biosynthesis; (R)-pantothenate from (R)-pantoate and beta-alanine: step 1/1. Catalyzes the condensation of pantoate with beta-alanine in an ATP-dependent reaction via a pantoyl-adenylate intermediate. The protein is Pantothenate synthetase of Burkholderia cenocepacia (strain HI2424).